The primary structure comprises 339 residues: Ribosomal RNA small subunit methyltransferase H (339 aa).

Residues 56 to 58, Asp-76, Phe-102, Asp-123, and Gln-130 each bind S-adenosyl-L-methionine; that span reads GGH. Disordered stretches follow at residues 274-309 and 320-339; these read RHSRGQYPEDENLPMPPQRPRYFSKPKRIAPSKAEV and LRVATRTDTPYNTDPSPQHS. Positions 325–339 are enriched in polar residues; it reads RTDTPYNTDPSPQHS.

This sequence belongs to the methyltransferase superfamily. RsmH family.

The protein localises to the cytoplasm. It catalyses the reaction cytidine(1402) in 16S rRNA + S-adenosyl-L-methionine = N(4)-methylcytidine(1402) in 16S rRNA + S-adenosyl-L-homocysteine + H(+). Specifically methylates the N4 position of cytidine in position 1402 (C1402) of 16S rRNA. The protein is Ribosomal RNA small subunit methyltransferase H of Psychrobacter sp. (strain PRwf-1).